Here is a 561-residue protein sequence, read N- to C-terminus: uncharacterized protein (561 aa).

2 consecutive transmembrane segments (helical) span residues 29–49 and 80–100; these read FIFNVGSLTPTTAVLGVKKII and FLFHTVGFFPIYTSSIGASII.

The protein resides in the cell membrane. This is an uncharacterized protein from Mycoplasma genitalium (strain ATCC 33530 / DSM 19775 / NCTC 10195 / G37) (Mycoplasmoides genitalium).